A 442-amino-acid chain; its full sequence is Protein translocase subunit SecY (442 aa).

A run of 10 helical transmembrane segments spans residues 29 to 49 (LITI…VPDI), 69 to 89 (IFTG…LPYI), 126 to 146 (YIAF…LLRP), 153 to 173 (PLFI…VMWI), 182 to 202 (IGNG…PQTL), 217 to 237 (ITAV…IVFV), 274 to 294 (VMPI…AGFA), 320 to 340 (VYTV…ASLI), 377 to 397 (LTFL…FVEQ), and 400 to 420 (GVTT…GVAI).

This sequence belongs to the SecY/SEC61-alpha family. Component of the Sec protein translocase complex. Heterotrimer consisting of SecY, SecE and SecG subunits. The heterotrimers can form oligomers, although 1 heterotrimer is thought to be able to translocate proteins. Interacts with the ribosome. Interacts with SecDF, and other proteins may be involved. Interacts with SecA.

It is found in the cell inner membrane. Its subcellular location is the cellular thylakoid membrane. Functionally, the central subunit of the protein translocation channel SecYEG. Consists of two halves formed by TMs 1-5 and 6-10. These two domains form a lateral gate at the front which open onto the bilayer between TMs 2 and 7, and are clamped together by SecE at the back. The channel is closed by both a pore ring composed of hydrophobic SecY resides and a short helix (helix 2A) on the extracellular side of the membrane which forms a plug. The plug probably moves laterally to allow the channel to open. The ring and the pore may move independently. This is Protein translocase subunit SecY from Synechocystis sp. (strain ATCC 27184 / PCC 6803 / Kazusa).